Reading from the N-terminus, the 390-residue chain is Protein MalY (390 aa).

Lys233 carries the N6-(pyridoxal phosphate)lysine modification.

The protein belongs to the class-II pyridoxal-phosphate-dependent aminotransferase family. MalY/PatB cystathionine beta-lyase subfamily. As to quaternary structure, homodimer. Interacts with MalT. Requires pyridoxal 5'-phosphate as cofactor.

The catalysed reaction is L,L-cystathionine + H2O = L-homocysteine + pyruvate + NH4(+). It carries out the reaction an S-substituted L-cysteine + H2O = a thiol + pyruvate + NH4(+). In terms of biological role, acts as a beta-cystathionase and as a repressor of the maltose regulon. This Escherichia coli (strain K12) protein is Protein MalY (malY).